Reading from the N-terminus, the 148-residue chain is Large ribosomal subunit protein uL15 (148 aa).

The tract at residues 1-51 is disordered; it reads MNLSNLKPAEGSTKTRKRIGRGAGSGLGGTSTRGHKGAKSRSGYSKKVGFE. A compositionally biased stretch (gly residues) spans 21–31; sequence RGAGSGLGGTS.

It belongs to the universal ribosomal protein uL15 family. Part of the 50S ribosomal subunit.

Its function is as follows. Binds to the 23S rRNA. This is Large ribosomal subunit protein uL15 from Bacteroides thetaiotaomicron (strain ATCC 29148 / DSM 2079 / JCM 5827 / CCUG 10774 / NCTC 10582 / VPI-5482 / E50).